We begin with the raw amino-acid sequence, 515 residues long: Cytochrome P450 monooxygenase ptmJ (515 aa).

A run of 4 helical transmembrane segments spans residues 6-26 (LGPF…LFVI), 50-70 (LGVV…LFCV), 82-102 (VFYL…EPVV), and 300-320 (VIIL…LFLH). Residue cysteine 449 coordinates heme.

Belongs to the cytochrome P450 family. Heme is required as a cofactor.

Its subcellular location is the membrane. The protein operates within secondary metabolite biosynthesis. Its function is as follows. Cytochrome P450 monooxygenase; part of the gene cluster that mediates the biosynthesis of the indole diterpenes penitrems. The geranylgeranyl diphosphate (GGPP) synthase ptmG catalyzes the first step in penitrem biosynthesis via conversion of farnesyl pyrophosphate and isopentyl pyrophosphate into geranylgeranyl pyrophosphate (GGPP). Condensation of indole-3-glycerol phosphate with GGPP by the prenyl transferase ptmC then forms 3-geranylgeranylindole (3-GGI). Epoxidation by the FAD-dependent monooxygenase ptmM leads to a epoxidized-GGI that is substrate of the terpene cyclase ptmB for cyclization to yield paspaline. Paspaline is subsequently converted to 13-desoxypaxilline by the cytochrome P450 monooxygenase ptmP, the latter being then converted to paxilline by the cytochrome P450 monooxygenase ptmQ. Paxilline is converted to beta-paxitriol via C-10 ketoreduction by the short-chain dehydrogenase ptmH which can be monoprenylated at the C-20 by the indole diterpene prenyltransferase ptmD. A two-step elimination (acetylation and elimination) process performed by the O-acetyltransferase ptmV and ptmI leads to the production of the prenylated form of penijanthine. The FAD-linked oxidoreductase ptmO then converts the prenylated form of penijanthine into PC-M5 which is in turn transformed into PC-M4 by the aromatic dimethylallyltransferase ptmE. Five sequential oxidative transformations performed by the cytochrome P450 monooxygenases ptmK, ptmU, ptmL, ptmN and ptmJ yield the various penitrem compounds. PtmK, ptmU and ptmM are involved in the formation of the key bicyclic ring of penitrem C via the formation of the intermediates secopenitrem D and penitrem D. PtmL catalyzes the epoxidation of penitrem D and C to yield penitrem B and F, respectively. PtmJ catalyzes the last benzylic hydroxylation to convert penitrem B to prenitrem E and penitrem F to penitrem A. The polypeptide is Cytochrome P450 monooxygenase ptmJ (Penicillium ochrochloron).